The primary structure comprises 82 residues: Hepcidin (82 aa).

Residues 1–23 (MALSVQIRAACLLLLLLVSLTAG) form the signal peptide. Residues 24-53 (SVLPSQTRQLTDLRTQDTAGATAGLTPVAQ) constitute a propeptide that is removed on maturation. 4 disulfide bridges follow: C64-C80, C67-C70, C68-C76, and C71-C79.

The protein belongs to the hepcidin family. Interacts with SLC40A1; this interaction promotes SLC40A1 rapid ubiquitination.

It is found in the secreted. In terms of biological role, liver-produced hormone that constitutes the main circulating regulator of iron absorption and distribution across tissues. Acts by promoting endocytosis and degradation of ferroportin/SLC40A1, leading to the retention of iron in iron-exporting cells and decreased flow of iron into plasma. Controls the major flows of iron into plasma: absorption of dietary iron in the intestine, recycling of iron by macrophages, which phagocytose old erythrocytes and other cells, and mobilization of stored iron from hepatocytes. Has strong antimicrobial activity against E.coli ML35P N.cinerea and weaker against S.epidermidis, S.aureus and group b streptococcus bacteria. Active against the fungus C.albicans. No activity against P.aeruginosa. The protein is Hepcidin (HAMP) of Sus scrofa (Pig).